A 63-amino-acid polypeptide reads, in one-letter code: Cecropin-C (63 aa).

The signal sequence occupies residues Met1–Ala23. Arg62 bears the Arginine amide mark.

It belongs to the cecropin family.

The protein resides in the secreted. Functionally, cecropins have lytic and antibacterial activity against several Gram-positive and Gram-negative bacteria. In Drosophila mauritiana (Fruit fly), this protein is Cecropin-C (CecC).